A 676-amino-acid polypeptide reads, in one-letter code: DNA ligase (676 aa).

Residues 39–43 (DYVYD), 88–91 (SLND), and Glu118 contribute to the NAD(+) site. The active-site N6-AMP-lysine intermediate is the Lys120. Residues Arg141, Glu175, Lys291, and Lys315 each contribute to the NAD(+) site. Residues Cys409, Cys412, Cys427, and Cys432 each coordinate Zn(2+). Residues 595–676 (EVESPFKDKT…MVDALDASHF (82 aa)) form the BRCT domain.

Belongs to the NAD-dependent DNA ligase family. LigA subfamily. Mg(2+) is required as a cofactor. Mn(2+) serves as cofactor.

It carries out the reaction NAD(+) + (deoxyribonucleotide)n-3'-hydroxyl + 5'-phospho-(deoxyribonucleotide)m = (deoxyribonucleotide)n+m + AMP + beta-nicotinamide D-nucleotide.. DNA ligase that catalyzes the formation of phosphodiester linkages between 5'-phosphoryl and 3'-hydroxyl groups in double-stranded DNA using NAD as a coenzyme and as the energy source for the reaction. It is essential for DNA replication and repair of damaged DNA. This Enterococcus faecalis (strain ATCC 700802 / V583) protein is DNA ligase.